The sequence spans 448 residues: Chromosomal replication initiator protein DnaA (448 aa).

The interval 1–73 (MNTHLTETWE…VNALKLLTSK (73 aa)) is domain I, interacts with DnaA modulators. Residues 73–109 (KKYNIDFIVTTEEKIEENQKNHNNEKSNIVVNDEMST) form a domain II region. Residues 110-326 (MLNPKYTFDS…GALIRIVAFS (217 aa)) are domain III, AAA+ region. ATP-binding residues include Gly154, Gly156, Lys157, and Thr158. The interval 327–448 (SLTNKEISID…KELNKRINQK (122 aa)) is domain IV, binds dsDNA.

This sequence belongs to the DnaA family. In terms of assembly, oligomerizes as a right-handed, spiral filament on DNA at oriC.

Its subcellular location is the cytoplasm. Plays an essential role in the initiation and regulation of chromosomal replication. ATP-DnaA binds to the origin of replication (oriC) to initiate formation of the DNA replication initiation complex once per cell cycle. Binds the DnaA box (a 9 base pair repeat at the origin) and separates the double-stranded (ds)DNA. Forms a right-handed helical filament on oriC DNA; dsDNA binds to the exterior of the filament while single-stranded (ss)DNA is stabiized in the filament's interior. The ATP-DnaA-oriC complex binds and stabilizes one strand of the AT-rich DNA unwinding element (DUE), permitting loading of DNA polymerase. After initiation quickly degrades to an ADP-DnaA complex that is not apt for DNA replication. Binds acidic phospholipids. In Clostridium botulinum (strain ATCC 19397 / Type A), this protein is Chromosomal replication initiator protein DnaA.